The sequence spans 308 residues: Porphobilinogen deaminase (308 aa).

The residue at position 241 (Cys241) is an S-(dipyrrolylmethanemethyl)cysteine.

It belongs to the HMBS family. As to quaternary structure, monomer. Requires dipyrromethane as cofactor.

It catalyses the reaction 4 porphobilinogen + H2O = hydroxymethylbilane + 4 NH4(+). It functions in the pathway porphyrin-containing compound metabolism; protoporphyrin-IX biosynthesis; coproporphyrinogen-III from 5-aminolevulinate: step 2/4. Tetrapolymerization of the monopyrrole PBG into the hydroxymethylbilane pre-uroporphyrinogen in several discrete steps. In Exiguobacterium sibiricum (strain DSM 17290 / CCUG 55495 / CIP 109462 / JCM 13490 / 255-15), this protein is Porphobilinogen deaminase.